The sequence spans 75 residues: Large ribosomal subunit protein uL24c (75 aa).

The protein belongs to the universal ribosomal protein uL24 family. As to quaternary structure, part of the 50S ribosomal subunit.

The protein localises to the plastid. The protein resides in the chloroplast. In terms of biological role, one of two assembly initiator proteins, it binds directly to the 5'-end of the 23S rRNA, where it nucleates assembly of the 50S subunit. This is Large ribosomal subunit protein uL24c (rpl24) from Cyanidioschyzon merolae (strain NIES-3377 / 10D) (Unicellular red alga).